The following is a 253-amino-acid chain: MRRLLLLCEYDGTLFAGLQRQGRGLRTVQGELERALPGIGALPKAVAAGRTDAGVHALAMPFHVDVESAIPVEKVPEALNRLLPEDLKVVGAREVAPDFHARKDALWRAYRYRILVRPHPSPLLRHRALWVRRPLDLEAMEEALSLLLGRHNFLGFAKEETRPGERELLEARLQVAEGEAGLEVRLYFRGKSFLRGQVRGMVGTLLEVGLGKRPPESLKAILKTADRRLAGPTAPAHGLYFVEAAYPEEKLSP.

The active-site Nucleophile is Asp-52. Tyr-110 is a substrate binding site.

It belongs to the tRNA pseudouridine synthase TruA family. In terms of assembly, homodimer.

The catalysed reaction is uridine(38/39/40) in tRNA = pseudouridine(38/39/40) in tRNA. In terms of biological role, formation of pseudouridine at positions 38, 39 and 40 in the anticodon stem and loop of transfer RNAs. The sequence is that of tRNA pseudouridine synthase A from Thermus thermophilus (strain ATCC BAA-163 / DSM 7039 / HB27).